The following is a 43-amino-acid chain: Large ribosomal subunit protein uL5 (43 aa).

It belongs to the universal ribosomal protein uL5 family. In terms of assembly, part of the 50S ribosomal subunit; part of the 5S rRNA/L5/L18/L25 subcomplex. Contacts the 5S rRNA and the P site tRNA. Forms a bridge to the 30S subunit in the 70S ribosome.

In terms of biological role, this is one of the proteins that bind and probably mediate the attachment of the 5S RNA into the large ribosomal subunit, where it forms part of the central protuberance. In the 70S ribosome it contacts protein S13 of the 30S subunit (bridge B1b), connecting the 2 subunits; this bridge is implicated in subunit movement. Contacts the P site tRNA; the 5S rRNA and some of its associated proteins might help stabilize positioning of ribosome-bound tRNAs. The protein is Large ribosomal subunit protein uL5 (rplE) of Proteus vulgaris.